The chain runs to 109 residues: Large ribosomal subunit protein uL22 (109 aa).

This sequence belongs to the universal ribosomal protein uL22 family. As to quaternary structure, part of the 50S ribosomal subunit.

Functionally, this protein binds specifically to 23S rRNA; its binding is stimulated by other ribosomal proteins, e.g. L4, L17, and L20. It is important during the early stages of 50S assembly. It makes multiple contacts with different domains of the 23S rRNA in the assembled 50S subunit and ribosome. In terms of biological role, the globular domain of the protein is located near the polypeptide exit tunnel on the outside of the subunit, while an extended beta-hairpin is found that lines the wall of the exit tunnel in the center of the 70S ribosome. This Wolinella succinogenes (strain ATCC 29543 / DSM 1740 / CCUG 13145 / JCM 31913 / LMG 7466 / NCTC 11488 / FDC 602W) (Vibrio succinogenes) protein is Large ribosomal subunit protein uL22.